Here is a 2192-residue protein sequence, read N- to C-terminus: Non-reducing polyketide synthase 1 (2192 aa).

The N-terminal acylcarrier protein transacylase domain (SAT) stretch occupies residues 5–243 (LLLGDQTADQ…VSIPIYAPYH (239 aa)). Positions 374–806 (NDKIAIVGMS…GGNTSLLLED (433 aa)) constitute a Ketosynthase family 3 (KS3) domain. Residues cysteine 546, histidine 681, and histidine 724 each act as for beta-ketoacyl synthase activity in the active site. The segment at 905-1218 (FCFTGQGSQY…ANSMCALFLA (314 aa)) is malonyl-CoA:ACP transacylase (MAT) domain. The For acyl/malonyl transferase activity role is filled by serine 993. The tract at residues 1293 to 1610 (SCQKIIDEEF…RKVLNTFLPP (318 aa)) is product template (PT) domain. Residues 1295-1430 (QKIIDEEFSA…CTVKFEDINT (136 aa)) are N-terminal hotdog fold. Residues 1295 to 1605 (QKIIDEEFSA…FQKIPRKVLN (311 aa)) enclose the PKS/mFAS DH domain. The Proton acceptor; for dehydratase activity role is filled by histidine 1327. Residues 1458-1605 (AHVIGRGLAY…FQKIPRKVLN (148 aa)) form a C-terminal hotdog fold region. The Proton donor; for dehydratase activity role is filled by aspartate 1518. The interval 1639–1668 (TQAQPAKAVPKQVTVAAPTPKAAPKKADLK) is disordered. Residues 1670-1747 (PAGPTIITRV…EMKKFFSQYD (78 aa)) enclose the Carrier 1 domain. The residue at position 1707 (serine 1707) is an O-(pantetheine 4'-phosphoryl)serine. The disordered stretch occupies residues 1748 to 1788 (GEVGTPEQDDSDSDSETSGDASTPMSEVGTPMTIPSSAVSE). Positions 1754–1764 (EQDDSDSDSET) are enriched in acidic residues. In terms of domain architecture, Carrier 2 spans 1798 to 1875 (APASGEVSIA…DVENALDMRP (78 aa)). Residue serine 1835 is modified to O-(pantetheine 4'-phosphoryl)serine. Residues 1913–2164 (SKYPAATSVL…SMMKPPHVSI (252 aa)) are thioesterase (TE) domain.

In terms of biological role, non-reducing polyketide synthase; part of the gene cluster that mediates the biosynthesis of elsinochromes, pigments consisting of at least four interconvertible tautomers (A, B, C and D) that have a core phenolic quinone to which various side chains are attached and which play an important role in fungal pathogenesis. The non-reducing polyketide synthase PKS1 was proposed to iteratively catalyze decarboxylation between acetyl-CoA and malonyl-CoA subunits for polyketide chain elongation. The released polyketide undergoes cyclization to form an aromatic ring, and proceeds via serial modification steps to produce the heptaketide back- bone of elsinochrome. As elsinochrome has a symmetrical structure, two identical heptaketides are fused to form a core 1,2-dihydrobenzo-perylene ring structure, which can then be successively modified to produce the various derivatives of elsinochrome. Some of these reactions may be cooperatively carried out, at least in part, by the products of RDT1, OXR1 and PKS1. PRF1, embedded within the elsinochrome cluster possibly functions to stabilize some of the biosynthetic enzymes required for elsinochrome production. As prefoldin is a hexamer containing 2 a and 4 b subunits, additional prefoldin subunits, whose coding genes may not immediately link to the elsinochrome biosynthetic gene cluster, are required to fulfill the chaperone function. In addition, no methyltransferase-coding gene exists within the biosynthetic gene cluster, even though elsinochrome has four methyl groups at positions C3, C7, C8 and C12. Apparently, the identified gene cluster does not contain the entire entourage of genes responsible for elsinochrome biosynthesis. Once elsinochrome is synthesized, it must be exported outside the fungal cells, which is probably accomplished by the ECT1 transporter, to avoid toxicity. This chain is Non-reducing polyketide synthase 1, found in Elsinoe fawcettii (Citrus scab fungus).